The chain runs to 485 residues: Glutamate--tRNA ligase (485 aa).

The 'HIGH' region motif lies at 11 to 21 (PSPTGLLHIGN). Residues 255 to 259 (KLSKR) carry the 'KMSKS' region motif. Lys258 contributes to the ATP binding site.

This sequence belongs to the class-I aminoacyl-tRNA synthetase family. Glutamate--tRNA ligase type 1 subfamily. In terms of assembly, monomer.

The protein localises to the cytoplasm. The catalysed reaction is tRNA(Glu) + L-glutamate + ATP = L-glutamyl-tRNA(Glu) + AMP + diphosphate. Catalyzes the attachment of glutamate to tRNA(Glu) in a two-step reaction: glutamate is first activated by ATP to form Glu-AMP and then transferred to the acceptor end of tRNA(Glu). This is Glutamate--tRNA ligase from Streptococcus mutans serotype c (strain ATCC 700610 / UA159).